The chain runs to 968 residues: RNA polymerase-associated protein RapA (968 aa).

The Helicase ATP-binding domain maps to 164–334 (DVGRRHAPRV…FARLRLLDPN (171 aa)). 177-184 (DEVGLGKT) serves as a coordination point for ATP. A DEAH box motif is present at residues 280–283 (DEAH). Residues 490-685 (RVEWLMGYLT…ALKAQLEQGR (196 aa)) enclose the Helicase C-terminal domain.

The protein belongs to the SNF2/RAD54 helicase family. RapA subfamily. As to quaternary structure, interacts with the RNAP. Has a higher affinity for the core RNAP than for the holoenzyme. Its ATPase activity is stimulated by binding to RNAP.

In terms of biological role, transcription regulator that activates transcription by stimulating RNA polymerase (RNAP) recycling in case of stress conditions such as supercoiled DNA or high salt concentrations. Probably acts by releasing the RNAP, when it is trapped or immobilized on tightly supercoiled DNA. Does not activate transcription on linear DNA. Probably not involved in DNA repair. The chain is RNA polymerase-associated protein RapA from Salmonella choleraesuis (strain SC-B67).